The primary structure comprises 932 residues: MWGFWLLLFWGFSGTHRWGMTTLAILGQRLNGVNECQDTTTCPAYATCTDTTESYYCTCKQGFLPSNGQTNFQGPGVECQDVNECLRSDSPCGSNSVCTNIPGRARCSCLSGFSSSAGGSWILGSPGHFLCTDVDECLTIGICPKNSNCSNSVGSYSCTCQSGFVSNGSTCEDEDECVTRNACPEHATCHNTLGSYYCTCNEGLEFSGGGPMFQGLEESCEDVDECSRNSTLCGPSFICINTLGSYSCSCPAGFSLSTFQIPGHPADGNCTDIDECDDICPSNSSCTNTLGSYFCTCHPGFASSNGQLNFTDQEVTCEDIDECTQDPFRCGRNSSCTNVPGSYNCSCLPDFRMDPGGSQAHGNFTCKRIPFKCKEDLIPKSEQIEQCQAGQGRNLDYTSFCTFVNATFTILDNTCENKSAPVSLQSAATSVSLMLEQASTWFEFSREETSTLGTILLETVESTMLAALLTPSGNASQTIRTEYLEIESKVINEECNEENVSINLKARGDKMDVGCFIIKESESTGTPGVAFVSFAHMDSVLDERFFEDGQASWKLRMNSHVVGGTVTGERKEDFSKPIVYTLQHIQPKQKSERSICVSWNTDVEDGRWTPSGCETVEASETHTVCSCNRMTNLAIIMASGELTMEFSLYIISYVGTVISLVCLALAIATFLLFRAVQNHNTYLHLHLCVCLFLAKILFLTGIDKTDNQTACAIIAGFLHYLFLACFFWMLVEAVMLFLMVRNLKVVNYFSSRNIKMLHLCAFGYGLPVVVVIISATVHPWGYGMHNRCWLNTETGFIWSFLGPVCMIITINSALLAWTLWVLRQKLCSVNSEVSKLKDTRLLTFKAIAQIFILGCSWVLGIFQIGPLASIMAYLFTTINSLQGAFIFLIHCLLNRQVRDEYRKLLTRKTDLSSHSQTSGILLSSMPSTSKTG.

The first 15 residues, 1–15 (MWGFWLLLFWGFSGT), serve as a signal peptide directing secretion. At 16 to 652 (HRWGMTTLAI…TMEFSLYIIS (637 aa)) the chain is on the extracellular side. EGF-like domains follow at residues 32–69 (GVNE…SNGQ) and 81–119 (DVNE…SAGG). Intrachain disulfides connect Cys36–Cys48, Cys42–Cys57, Cys85–Cys98, Cys92–Cys107, Cys137–Cys149, Cys143–Cys158, Cys160–Cys171, Cys177–Cys189, Cys183–Cys198, Cys226–Cys239, and Cys233–Cys248. The EGF-like 3; calcium-binding domain maps to 133–172 (DVDECLTIGICPKNSNCSNSVGSYSCTCQSGFVSNGSTCE). N-linked (GlcNAc...) asparagine glycosylation is found at Asn148 and Asn167. The 38-residue stretch at 173–210 (DEDECVTRNACPEHATCHNTLGSYYCTCNEGLEFSGGG) folds into the EGF-like 4; calcium-binding domain. An EGF-like 5; calcium-binding domain is found at 222 to 260 (DVDECSRNSTLCGPSFICINTLGSYSCSCPAGFSLSTFQ). An N-linked (GlcNAc...) asparagine glycan is attached at Asn229. 10 N-linked (GlcNAc...) asparagine glycosylation sites follow: Asn269, Asn283, Asn309, Asn333, Asn344, Asn363, Asn405, Asn417, Asn474, and Asn499. The EGF-like 6; calcium-binding domain maps to 272–307 (DIDECDDICPSNSSCTNTLGSYFCTCHPGFASSNGQ). Cystine bridges form between Cys276-Cys286 and Cys280-Cys295. Positions 319–354 (DIDECTQDPFRCGRNSSCTNVPGSYNCSCLPDFRMD) constitute an EGF-like 7; calcium-binding domain. 2 disulfide bridges follow: Cys323/Cys336 and Cys330/Cys345. Residues 482 to 643 (EYLEIESKVI…AIIMASGELT (162 aa)) form the GAIN-B domain. The Cell attachment site motif lies at 507–509 (RGD). Intrachain disulfides connect Cys596/Cys625 and Cys613/Cys627. The tract at residues 596–643 (CVSWNTDVEDGRWTPSGCETVEASETHTVCSCNRMTNLAIIMASGELT) is GPS. The chain crosses the membrane as a helical span at residues 653 to 673 (YVGTVISLVCLALAIATFLLF). The Cytoplasmic segment spans residues 674-681 (RAVQNHNT). The chain crosses the membrane as a helical span at residues 682–702 (YLHLHLCVCLFLAKILFLTGI). Topologically, residues 703 to 719 (DKTDNQTACAIIAGFLH) are extracellular. N-linked (GlcNAc...) asparagine glycosylation is present at Asn707. The helical transmembrane segment at 720-740 (YLFLACFFWMLVEAVMLFLMV) threads the bilayer. The Cytoplasmic portion of the chain corresponds to 741–756 (RNLKVVNYFSSRNIKM). Residues 757 to 777 (LHLCAFGYGLPVVVVIISATV) traverse the membrane as a helical segment. Topologically, residues 778–795 (HPWGYGMHNRCWLNTETG) are extracellular. A helical transmembrane segment spans residues 796 to 816 (FIWSFLGPVCMIITINSALLA). Over 817 to 849 (WTLWVLRQKLCSVNSEVSKLKDTRLLTFKAIAQ) the chain is Cytoplasmic. The chain crosses the membrane as a helical span at residues 850–870 (IFILGCSWVLGIFQIGPLASI). Topologically, residues 871 to 872 (MA) are extracellular. Residues 873–893 (YLFTTINSLQGAFIFLIHCLL) traverse the membrane as a helical segment. Residues 894 to 932 (NRQVRDEYRKLLTRKTDLSSHSQTSGILLSSMPSTSKTG) are Cytoplasmic-facing.

This sequence belongs to the G-protein coupled receptor 2 family. Adhesion G-protein coupled receptor (ADGR) subfamily.

Its subcellular location is the cell membrane. Orphan receptor involved in cell adhesion and probably in cell-cell interactions involved specifically cells of the immune system. May play a role in regulatory T-cells (Treg) development. The chain is Adhesion G protein-coupled receptor E2 (Adgre1) from Rattus norvegicus (Rat).